The primary structure comprises 2027 residues: Citron Rho-interacting kinase (2027 aa).

Methionine 1 bears the N-acetylmethionine mark. A Protein kinase domain is found at 97–360 (FEVRSLVGCG…FEGLCCHPFF (264 aa)). ATP-binding positions include 103–111 (VGCGHFAEV) and lysine 126. Residue aspartate 221 is the Proton acceptor of the active site. The 71-residue stretch at 361–431 (SKIDWNNIRN…SKALGILGRS (71 aa)) folds into the AGC-kinase C-terminal domain. Residues serine 433, serine 440, serine 480, and serine 582 each carry the phosphoserine modification. The stretch at 453–1297 (IKSKELQDSQ…SAREEAAHRK (845 aa)) forms a coiled coil. Residues 1091 to 1302 (LAVKEHKAEI…AAHRKATDHP (212 aa)) form an interaction with Rho/Rac region. Residue tyrosine 1196 is modified to Phosphotyrosine. Residues 1290–1303 (REEAAHRKATDHPH) are compositionally biased toward basic and acidic residues. Disordered stretches follow at residues 1290 to 1310 (REEA…PATA) and 1322 to 1351 (SPEH…EFSR). Residues 1327–1337 (PSAMSLLAPPS) are compositionally biased toward low complexity. Residues 1339–1351 (RRKESSTPEEFSR) show a composition bias toward basic and acidic residues. Residues 1362-1411 (PHRFNVGLNMRATKCAVCLDTVHFGRQASKCLECQVMCHPKCSTCLPATC) form a Phorbol-ester/DAG-type zinc finger. The PH domain occupies 1443 to 1563 (SLHLEGWMKV…WVTALESVVA (121 aa)). Residues 1591-1881 (RLDMNCTLPF…RYLGPAISSG (291 aa)) enclose the CNH domain. Lysine 1721 is modified (N6-acetyllysine). A disordered region spans residues 1905 to 2012 (ESGTEHHRGP…RGRLPAGAVR (108 aa)). Serine 1940 bears the Phosphoserine mark. Positions 1948 to 2003 (SHPREPSTPHRYREGRTELRRDKSPGRPLEREKSPGRMLSTRRERSPGRLFEDSSR) are enriched in basic and acidic residues. An SH3-binding motif is present at residues 1953–1958 (PSTPHR). Serine 1993 is subject to Phosphoserine. At threonine 2013 the chain carries Phosphothreonine.

The protein belongs to the protein kinase superfamily. AGC Ser/Thr protein kinase family. In terms of assembly, directly interacts with KIF14 depending on the activation state (stronger interaction with the kinase-dead form). Homodimer. Interacts with TTC3.

The protein localises to the cytoplasm. It catalyses the reaction L-seryl-[protein] + ATP = O-phospho-L-seryl-[protein] + ADP + H(+). It carries out the reaction L-threonyl-[protein] + ATP = O-phospho-L-threonyl-[protein] + ADP + H(+). In terms of biological role, plays a role in cytokinesis. Required for KIF14 localization to the central spindle and midbody. Putative RHO/RAC effector that binds to the GTP-bound forms of RHO and RAC1. It probably binds p21 with a tighter specificity in vivo. Displays serine/threonine protein kinase activity. Plays an important role in the regulation of cytokinesis and the development of the central nervous system. Phosphorylates MYL9/MLC2. The protein is Citron Rho-interacting kinase (CIT) of Homo sapiens (Human).